The sequence spans 199 residues: Ribonuclease HII (199 aa).

The 189-residue stretch at 11 to 199 (SRVAGVDEVG…RRSFLRRLLG (189 aa)) folds into the RNase H type-2 domain. Residues D17, E18, and D113 each coordinate a divalent metal cation.

This sequence belongs to the RNase HII family. It depends on Mn(2+) as a cofactor. Mg(2+) is required as a cofactor.

The protein resides in the cytoplasm. The enzyme catalyses Endonucleolytic cleavage to 5'-phosphomonoester.. Its function is as follows. Endonuclease that specifically degrades the RNA of RNA-DNA hybrids. This is Ribonuclease HII from Synechococcus sp. (strain CC9902).